The chain runs to 67 residues: Large ribosomal subunit protein uL30 (67 aa).

Belongs to the universal ribosomal protein uL30 family. As to quaternary structure, part of the 50S ribosomal subunit.

The protein is Large ribosomal subunit protein uL30 of Thermotoga petrophila (strain ATCC BAA-488 / DSM 13995 / JCM 10881 / RKU-1).